Consider the following 143-residue polypeptide: Large ribosomal subunit protein uL13 (143 aa).

Belongs to the universal ribosomal protein uL13 family. In terms of assembly, part of the 50S ribosomal subunit.

In terms of biological role, this protein is one of the early assembly proteins of the 50S ribosomal subunit, although it is not seen to bind rRNA by itself. It is important during the early stages of 50S assembly. The sequence is that of Large ribosomal subunit protein uL13 from Desulfitobacterium hafniense (strain Y51).